The sequence spans 503 residues: Probable cytosol aminopeptidase (503 aa).

2 residues coordinate Mn(2+): Lys270 and Asp275. The active site involves Lys282. Mn(2+) is bound by residues Asp293, Asp352, and Glu354. The active site involves Arg356.

It belongs to the peptidase M17 family. The cofactor is Mn(2+).

Its subcellular location is the cytoplasm. It catalyses the reaction Release of an N-terminal amino acid, Xaa-|-Yaa-, in which Xaa is preferably Leu, but may be other amino acids including Pro although not Arg or Lys, and Yaa may be Pro. Amino acid amides and methyl esters are also readily hydrolyzed, but rates on arylamides are exceedingly low.. It carries out the reaction Release of an N-terminal amino acid, preferentially leucine, but not glutamic or aspartic acids.. Functionally, presumably involved in the processing and regular turnover of intracellular proteins. Catalyzes the removal of unsubstituted N-terminal amino acids from various peptides. This chain is Probable cytosol aminopeptidase, found in Yersinia enterocolitica serotype O:8 / biotype 1B (strain NCTC 13174 / 8081).